We begin with the raw amino-acid sequence, 472 residues long: Probable diguanylate cyclase DgcF (472 aa).

Helical transmembrane passes span 21-41 (SIAI…LRLV), 44-64 (LSLF…YVWL), 90-110 (VSLA…LLVV), 128-148 (LFNY…IGSV), 167-187 (FSTG…GVLP), 198-218 (IALI…SLAF), 237-257 (LLTF…VIDI), and 273-293 (LGIA…AAIN). One can recognise a GGDEF domain in the interval 330 to 467 (QHLTVMLLDI…GRNRTSTMRY (138 aa)). The Mg(2+) site is built by aspartate 338 and isoleucine 339. Asparagine 346, histidine 351, and aspartate 355 together coordinate substrate. Glutamate 381 contacts Mg(2+).

As to quaternary structure, homodimer. The cofactor is Mg(2+).

The protein localises to the cell membrane. The enzyme catalyses 2 GTP = 3',3'-c-di-GMP + 2 diphosphate. Its pathway is purine metabolism; 3',5'-cyclic di-GMP biosynthesis. Catalyzes the synthesis of cyclic-di-GMP (c-di-GMP) via the condensation of 2 GTP molecules. The polypeptide is Probable diguanylate cyclase DgcF (Escherichia coli O157:H7).